The sequence spans 282 residues: Pantothenate synthetase (282 aa).

30 to 37 (MGALHAGH) is a binding site for ATP. H37 serves as the catalytic Proton donor. (R)-pantoate is bound at residue Q61. Beta-alanine is bound at residue Q61. 147–150 (GEKD) contributes to the ATP binding site. Residue Q153 coordinates (R)-pantoate. ATP-binding positions include V176 and 184-187 (LSSR).

Belongs to the pantothenate synthetase family. As to quaternary structure, homodimer.

It localises to the cytoplasm. The catalysed reaction is (R)-pantoate + beta-alanine + ATP = (R)-pantothenate + AMP + diphosphate + H(+). Its pathway is cofactor biosynthesis; (R)-pantothenate biosynthesis; (R)-pantothenate from (R)-pantoate and beta-alanine: step 1/1. In terms of biological role, catalyzes the condensation of pantoate with beta-alanine in an ATP-dependent reaction via a pantoyl-adenylate intermediate. In Bacteroides fragilis (strain ATCC 25285 / DSM 2151 / CCUG 4856 / JCM 11019 / LMG 10263 / NCTC 9343 / Onslow / VPI 2553 / EN-2), this protein is Pantothenate synthetase.